The primary structure comprises 240 residues: Uridylate kinase (240 aa).

K14 to G17 contributes to the ATP binding site. G56 lines the UMP pocket. Positions 57 and 61 each coordinate ATP. UMP is bound by residues D76 and T137–T144. ATP contacts are provided by T164, Y170, and D173.

Belongs to the UMP kinase family. Homohexamer.

Its subcellular location is the cytoplasm. The catalysed reaction is UMP + ATP = UDP + ADP. Its pathway is pyrimidine metabolism; CTP biosynthesis via de novo pathway; UDP from UMP (UMPK route): step 1/1. Inhibited by UTP. Its function is as follows. Catalyzes the reversible phosphorylation of UMP to UDP. The chain is Uridylate kinase from Verminephrobacter eiseniae (strain EF01-2).